The sequence spans 344 residues: tRNA N6-adenosine threonylcarbamoyltransferase (344 aa).

Positions 111 and 115 each coordinate Fe cation. Substrate contacts are provided by residues 133–137 (LVSGG), D166, G179, and N283. Fe cation is bound at residue D311.

It belongs to the KAE1 / TsaD family. Fe(2+) is required as a cofactor.

Its subcellular location is the cytoplasm. It catalyses the reaction L-threonylcarbamoyladenylate + adenosine(37) in tRNA = N(6)-L-threonylcarbamoyladenosine(37) in tRNA + AMP + H(+). Required for the formation of a threonylcarbamoyl group on adenosine at position 37 (t(6)A37) in tRNAs that read codons beginning with adenine. Is involved in the transfer of the threonylcarbamoyl moiety of threonylcarbamoyl-AMP (TC-AMP) to the N6 group of A37, together with TsaE and TsaB. TsaD likely plays a direct catalytic role in this reaction. The chain is tRNA N6-adenosine threonylcarbamoyltransferase from Orientia tsutsugamushi (strain Boryong) (Rickettsia tsutsugamushi).